A 322-amino-acid polypeptide reads, in one-letter code: MKMRYCVLVSVLAILVIRGSAENCGRQAGGALCPGGQCCSKWGWCGTTPDHCGTDCQSQCGGTPSPGPSGSDITNLIPRSTFDRMLLHRNDGACPGKNFYTYDGFIAAARSFGAFATTGDTDTRKREIAAFLAQTSHETTGGWASAPDGPYSWGYCFLREQGNPGAYCTPSAQWPCAPGRKYFGRGPIQITHNYNYGPAGKALGVDLLNNPDLVATDPAISFKTALWFWMTPQSPKPSCHDVITGRWTPSAADRSAGRLPGFGVITNIINGGLECGHGSDSRVQDRIGFYKRYCQIFGIGTGDNLDCGNQRSFGSGRLVDTM.

A signal peptide spans 1 to 21; it reads MKMRYCVLVSVLAILVIRGSA. The region spanning 22–62 is the Chitin-binding type-1 domain; sequence ENCGRQAGGALCPGGQCCSKWGWCGTTPDHCGTDCQSQCGG. Intrachain disulfides connect Cys24–Cys39, Cys33–Cys45, Cys38–Cys52, and Cys56–Cys60.

Belongs to the glycosyl hydrolase 19 family. Chitinase class I subfamily.

It catalyses the reaction Random endo-hydrolysis of N-acetyl-beta-D-glucosaminide (1-&gt;4)-beta-linkages in chitin and chitodextrins.. Functionally, defense against chitin-containing fungal pathogens. This chain is Endochitinase, found in Actinidia chinensis var. chinensis (Chinese soft-hair kiwi).